A 141-amino-acid polypeptide reads, in one-letter code: Hemoglobin subunit alpha (141 aa).

The region spanning 1–141 (VLSPADKSNV…VSTVLTSKYR (141 aa)) is the Globin domain. Ser-3 is modified (phosphoserine). Residues Lys-7 and Lys-11 each carry the N6-succinyllysine modification. An N6-acetyllysine; alternate modification is found at Lys-16. N6-succinyllysine; alternate is present on Lys-16. Phosphotyrosine is present on Tyr-24. Ser-35 is modified (phosphoserine). Lys-40 carries the N6-succinyllysine modification. A Phosphoserine modification is found at Ser-49. His-58 is a binding site for O2. Heme b is bound at residue His-87. Position 102 is a phosphoserine (Ser-102). Thr-108 carries the phosphothreonine modification. Ser-124 and Ser-131 each carry phosphoserine. Phosphothreonine is present on residues Thr-134 and Thr-137. Ser-138 carries the post-translational modification Phosphoserine.

Belongs to the globin family. Heterotetramer of two alpha chains and two beta chains. As to expression, red blood cells.

Its function is as follows. Involved in oxygen transport from the lung to the various peripheral tissues. In terms of biological role, hemopressin acts as an antagonist peptide of the cannabinoid receptor CNR1. Hemopressin-binding efficiently blocks cannabinoid receptor CNR1 and subsequent signaling. The sequence is that of Hemoglobin subunit alpha (HBA) from Saguinus oedipus (Cotton-top tamarin).